The chain runs to 396 residues: Ribosomal RNA large subunit methyltransferase I (396 aa).

A PUA domain is found at 2-81 (SVRLVLAKGR…ESIDIAFFTR (80 aa)).

The protein belongs to the methyltransferase superfamily. RlmI family.

The protein resides in the cytoplasm. The catalysed reaction is cytidine(1962) in 23S rRNA + S-adenosyl-L-methionine = 5-methylcytidine(1962) in 23S rRNA + S-adenosyl-L-homocysteine + H(+). Specifically methylates the cytosine at position 1962 (m5C1962) of 23S rRNA. The polypeptide is Ribosomal RNA large subunit methyltransferase I (Escherichia coli (strain UTI89 / UPEC)).